The following is a 359-amino-acid chain: Peptide chain release factor 1 (359 aa).

Residue glutamine 236 is modified to N5-methylglutamine.

The protein belongs to the prokaryotic/mitochondrial release factor family. Post-translationally, methylated by PrmC. Methylation increases the termination efficiency of RF1.

The protein localises to the cytoplasm. Peptide chain release factor 1 directs the termination of translation in response to the peptide chain termination codons UAG and UAA. This chain is Peptide chain release factor 1, found in Streptococcus pneumoniae serotype 19F (strain G54).